The chain runs to 323 residues: Phosphopantothenate--cysteine ligase 2 (323 aa).

The protein belongs to the PPC synthetase family. In terms of assembly, homodimer.

The catalysed reaction is (R)-4'-phosphopantothenate + L-cysteine + CTP = N-[(R)-4-phosphopantothenoyl]-L-cysteine + CMP + diphosphate + H(+). It participates in cofactor biosynthesis; coenzyme A biosynthesis; CoA from (R)-pantothenate: step 2/5. In terms of biological role, catalyzes the first step in the biosynthesis of coenzyme A from vitamin B5, where cysteine is conjugated to 4'-phosphopantothenate to form 4-phosphopantothenoylcysteine. The sequence is that of Phosphopantothenate--cysteine ligase 2 from Oryza sativa subsp. japonica (Rice).